We begin with the raw amino-acid sequence, 560 residues long: Arginine--tRNA ligase (560 aa).

Residues 121–131 (PNIAKPFSMGH) carry the 'HIGH' region motif.

This sequence belongs to the class-I aminoacyl-tRNA synthetase family. In terms of assembly, monomer.

It localises to the cytoplasm. The enzyme catalyses tRNA(Arg) + L-arginine + ATP = L-arginyl-tRNA(Arg) + AMP + diphosphate. The protein is Arginine--tRNA ligase of Exiguobacterium sp. (strain ATCC BAA-1283 / AT1b).